A 62-amino-acid polypeptide reads, in one-letter code: Photosystem II reaction center protein Z (62 aa).

The next 2 membrane-spanning stretches (helical) occupy residues 8–28 and 41–61; these read AVFA…VVLA and FSGA…NSFV.

Belongs to the PsbZ family. As to quaternary structure, PSII is composed of 1 copy each of membrane proteins PsbA, PsbB, PsbC, PsbD, PsbE, PsbF, PsbH, PsbI, PsbJ, PsbK, PsbL, PsbM, PsbT, PsbY, PsbZ, Psb30/Ycf12, at least 3 peripheral proteins of the oxygen-evolving complex and a large number of cofactors. It forms dimeric complexes.

It is found in the plastid. Its subcellular location is the chloroplast thylakoid membrane. Functionally, may control the interaction of photosystem II (PSII) cores with the light-harvesting antenna, regulates electron flow through the 2 photosystem reaction centers. PSII is a light-driven water plastoquinone oxidoreductase, using light energy to abstract electrons from H(2)O, generating a proton gradient subsequently used for ATP formation. This is Photosystem II reaction center protein Z from Zygnema circumcarinatum (Green alga).